Consider the following 412-residue polypeptide: Multifunctional CCA protein (412 aa).

ATP contacts are provided by glycine 8 and arginine 11. Residues glycine 8 and arginine 11 each coordinate CTP. Mg(2+)-binding residues include glutamate 21 and aspartate 23. Positions 91, 137, and 140 each coordinate ATP. Residues arginine 91, arginine 137, and arginine 140 each coordinate CTP. In terms of domain architecture, HD spans 228 to 329 (CGIHTLMSLQ…WRLLQRLDVL (102 aa)).

This sequence belongs to the tRNA nucleotidyltransferase/poly(A) polymerase family. Bacterial CCA-adding enzyme type 1 subfamily. As to quaternary structure, monomer. Can also form homodimers and oligomers. It depends on Mg(2+) as a cofactor. Ni(2+) serves as cofactor.

The enzyme catalyses a tRNA precursor + 2 CTP + ATP = a tRNA with a 3' CCA end + 3 diphosphate. The catalysed reaction is a tRNA with a 3' CCA end + 2 CTP + ATP = a tRNA with a 3' CCACCA end + 3 diphosphate. Its function is as follows. Catalyzes the addition and repair of the essential 3'-terminal CCA sequence in tRNAs without using a nucleic acid template. Adds these three nucleotides in the order of C, C, and A to the tRNA nucleotide-73, using CTP and ATP as substrates and producing inorganic pyrophosphate. tRNA 3'-terminal CCA addition is required both for tRNA processing and repair. Also involved in tRNA surveillance by mediating tandem CCA addition to generate a CCACCA at the 3' terminus of unstable tRNAs. While stable tRNAs receive only 3'-terminal CCA, unstable tRNAs are marked with CCACCA and rapidly degraded. This Acinetobacter baumannii (strain AB307-0294) protein is Multifunctional CCA protein.